The chain runs to 329 residues: IDS-like terpene synthase 1 (329 aa).

Mg(2+) contacts are provided by aspartate 79 and aspartate 83.

The protein belongs to the FPP/GGPP synthase family. It depends on Mg(2+) as a cofactor.

It carries out the reaction (2E)-geranyl diphosphate + H2O = linalool + diphosphate. It catalyses the reaction (2E,6E)-farnesyl diphosphate + H2O = (6E)-nerolidol + diphosphate. Functionally, terpene synthase that shows monoterpene synthase activity and produces linalool, using geranyl diphosphate (GPP) as substrate. Also shows sesquiterpene synthase activity as it is able to convert farnesyl diphosphate (FPP) into (E)-nerolidol. The sequence is that of IDS-like terpene synthase 1 from Melampsora lini (Rust fungus).